Consider the following 103-residue polypeptide: UPF0145 protein BT9727_3206 (103 aa).

This sequence belongs to the UPF0145 family.

This is UPF0145 protein BT9727_3206 from Bacillus thuringiensis subsp. konkukian (strain 97-27).